The following is a 376-amino-acid chain: UPF0754 membrane protein BLi01057/BL02871 (376 aa).

2 consecutive transmembrane segments (helical) span residues 1–21 (MYVF…GAVT) and 356–376 (YLGG…VILI).

Belongs to the UPF0754 family.

Its subcellular location is the cell membrane. The sequence is that of UPF0754 membrane protein BLi01057/BL02871 from Bacillus licheniformis (strain ATCC 14580 / DSM 13 / JCM 2505 / CCUG 7422 / NBRC 12200 / NCIMB 9375 / NCTC 10341 / NRRL NRS-1264 / Gibson 46).